The chain runs to 169 residues: UPF0725 protein At2g19200 (169 aa).

It belongs to the UPF0725 (EMB2204) family.

The sequence is that of UPF0725 protein At2g19200 from Arabidopsis thaliana (Mouse-ear cress).